The primary structure comprises 590 residues: Vesicular glutamate transporter 3 (590 aa).

At methionine 1–tyrosine 76 the chain is on the cytoplasmic side. A helical membrane pass occupies residues isoleucine 77–glycine 97. At valine 98 to glycine 130 the chain is on the vesicular side. Asparagine 106 and asparagine 112 each carry an N-linked (GlcNAc...) asparagine glycan. The helical transmembrane segment at leucine 131–serine 151 threads the bilayer. Topologically, residues asparagine 152–lysine 153 are cytoplasmic. A helical membrane pass occupies residues leucine 154–isoleucine 174. The Vesicular portion of the chain corresponds to proline 175–tyrosine 182. The chain crosses the membrane as a helical span at residues glycine 183–cysteine 203. The Cytoplasmic segment spans residues histidine 204–threonine 221. Residues threonine 222–valine 242 form a helical membrane-spanning segment. Residues glutamine 243–serine 249 are Vesicular-facing. A helical transmembrane segment spans residues valine 250–tyrosine 270. Residues asparagine 271 to methionine 315 are Cytoplasmic-facing. The chain crosses the membrane as a helical span at residues proline 316–isoleucine 336. Over serine 337–glycine 354 the chain is Vesicular. The chain crosses the membrane as a helical span at residues isoleucine 355–alanine 375. Residues aspartate 376–lysine 391 lie on the Cytoplasmic side of the membrane. Residues isoleucine 392–histidine 412 traverse the membrane as a helical segment. Over threonine 413–arginine 414 the chain is Vesicular. Residues alanine 415 to phenylalanine 435 traverse the membrane as a helical segment. At asparagine 436 to serine 448 the chain is on the cytoplasmic side. A helical membrane pass occupies residues isoleucine 449–valine 469. Topologically, residues glycine 470–glutamine 482 are vesicular. Residues histidine 483–alanine 503 traverse the membrane as a helical segment. At serine 504 to threonine 587 the chain is on the cytoplasmic side. Over residues glutamate 526–proline 535 the composition is skewed to acidic residues. A disordered region spans residues glutamate 526–glutamine 590. Positions serine 536 to arginine 557 are enriched in polar residues.

This sequence belongs to the major facilitator superfamily. Sodium/anion cotransporter family. VGLUT subfamily.

The protein resides in the cytoplasmic vesicle. It localises to the secretory vesicle. The protein localises to the synaptic vesicle membrane. It is found in the cell membrane. Its subcellular location is the synapse. The protein resides in the synaptosome. It catalyses the reaction L-glutamate(out) = L-glutamate(in). The catalysed reaction is 3 Na(+)(out) + phosphate(out) = 3 Na(+)(in) + phosphate(in). The enzyme catalyses chloride(in) = chloride(out). Its activity is regulated as follows. The L-glutamate uniporter activity exhibits a biphasic dependence on chloride concentration. Chloride channel activity is allosterically activated by lumenal H(+) and Cl(-) leading to synaptic vesicles acidification. The glutamate transport activity is allosterically activated by lumenal H(+) and Cl(-), preventing non-vesicular L-glutamate release. Its function is as follows. Multifunctional transporter that transports L-glutamate as well as multiple ions such as chloride, sodium and phosphate. At the synaptic vesicle membrane, mainly functions as an uniporter that mediates the uptake of L-glutamate into synaptic vesicles at presynaptic nerve terminals of excitatory neural cells. The L-glutamate uniporter activity is electrogenic and is driven by the proton electrochemical gradient, mainly by the electrical gradient established by the vacuolar H(+)-ATPase across the synaptic vesicle membrane. In addition, functions as a chloride channel that allows a chloride permeation through the synaptic vesicle membrane that affects the proton electrochemical gradient and promotes synaptic vesicles acidification. At the plasma membrane, following exocytosis, functions as a symporter of Na(+) and phosphate from the extracellular space to the cytoplasm allowing synaptic phosphate homeostasis regulation. The symporter activity is electrogenic. Moreover, operates synergistically with SLC18A3/VACHT under a constant H(+) gradient, thereby allowing striatal vesicular acetylcholine uptake. The chain is Vesicular glutamate transporter 3 from Danio rerio (Zebrafish).